We begin with the raw amino-acid sequence, 238 residues long: 1-(5-phosphoribosyl)-5-[(5-phosphoribosylamino)methylideneamino] imidazole-4-carboxamide isomerase (238 aa).

Asp8 acts as the Proton acceptor in catalysis. Asp129 acts as the Proton donor in catalysis.

The protein belongs to the HisA/HisF family.

The protein localises to the cytoplasm. The catalysed reaction is 1-(5-phospho-beta-D-ribosyl)-5-[(5-phospho-beta-D-ribosylamino)methylideneamino]imidazole-4-carboxamide = 5-[(5-phospho-1-deoxy-D-ribulos-1-ylimino)methylamino]-1-(5-phospho-beta-D-ribosyl)imidazole-4-carboxamide. It functions in the pathway amino-acid biosynthesis; L-histidine biosynthesis; L-histidine from 5-phospho-alpha-D-ribose 1-diphosphate: step 4/9. The protein is 1-(5-phosphoribosyl)-5-[(5-phosphoribosylamino)methylideneamino] imidazole-4-carboxamide isomerase of Anaeromyxobacter dehalogenans (strain 2CP-1 / ATCC BAA-258).